The sequence spans 171 residues: Dual specificity protein phosphatase OPG106 (171 aa).

A Tyrosine-protein phosphatase domain is found at 23–171; sequence SPTIMTRVTN…IIEKYVIDKN (149 aa). Cys-110 (phosphocysteine intermediate) is an active-site residue.

The protein belongs to the protein-tyrosine phosphatase family. Non-receptor class dual specificity subfamily. Homodimer.

The protein resides in the virion. The protein localises to the host cytoplasm. It catalyses the reaction O-phospho-L-tyrosyl-[protein] + H2O = L-tyrosyl-[protein] + phosphate. It carries out the reaction O-phospho-L-seryl-[protein] + H2O = L-seryl-[protein] + phosphate. Serine/tyrosine phosphatase which down-regulates cellular antiviral response by dephosphorylating activated host STAT1 and blocking interferon (IFN)-stimulated innate immune responses. Dephosphorylates the OPG144 protein. This Homo sapiens (Human) protein is Dual specificity protein phosphatase OPG106 (OPG106).